A 924-amino-acid polypeptide reads, in one-letter code: Exocyst complex component 2 (924 aa).

The IPT/TIG domain occupies 8 to 93 (PLVTGISPNE…GTSTVSFKLL (86 aa)). A coiled-coil region spans residues 240–260 (QKLENVLNRASNTADTLFQEV). Ser431, Ser432, and Ser435 each carry phosphoserine. The residue at position 440 (Thr440) is a Phosphothreonine. N6-acetyllysine is present on Lys454. Ser888 carries the post-translational modification Phosphoserine.

The protein belongs to the SEC5 family. In terms of assembly, the exocyst complex is composed of EXOC1, EXOC2, EXOC3, EXOC4, EXOC5, EXOC6, EXOC7 and EXOC8. Interacts with EXOC3L1. Interacts with GNEFR/DELGEF; this interaction occurs only in the presence of magnesium or manganese and is stimulated by dCTP or GTP. Interacts with RALA and RALB. Interacts with ARL13B; regulates ARL13B localization to the cilium membrane. In terms of tissue distribution, widely expressed with highest levels in brain and placenta.

It is found in the midbody. The protein resides in the midbody ring. Functionally, component of the exocyst complex involved in the docking of exocytic vesicles with fusion sites on the plasma membrane. The sequence is that of Exocyst complex component 2 (EXOC2) from Homo sapiens (Human).